A 371-amino-acid polypeptide reads, in one-letter code: uncharacterized protein (371 aa).

3 Solcar repeats span residues 3–98 (DDSL…CKVL), 131–276 (RYWG…FKSF), and 284–369 (KSNF…VRKW). The next 6 helical transmembrane spans lie at 9–29 (AIAG…LDVV), 73–93 (GVGP…VVYE), 137–157 (IFSA…IWVV), 253–273 (LFPS…YEYF), 290–310 (VLAA…HEVL), and 341–362 (YYSG…TFLS).

The protein belongs to the mitochondrial carrier (TC 2.A.29) family.

It is found in the mitochondrion inner membrane. This is an uncharacterized protein from Schizosaccharomyces pombe (strain 972 / ATCC 24843) (Fission yeast).